The sequence spans 283 residues: Elongation factor Ts (283 aa).

The involved in Mg(2+) ion dislocation from EF-Tu stretch occupies residues 80 to 83 (TDFV).

It belongs to the EF-Ts family.

It localises to the cytoplasm. Its function is as follows. Associates with the EF-Tu.GDP complex and induces the exchange of GDP to GTP. It remains bound to the aminoacyl-tRNA.EF-Tu.GTP complex up to the GTP hydrolysis stage on the ribosome. The sequence is that of Elongation factor Ts from Erwinia tasmaniensis (strain DSM 17950 / CFBP 7177 / CIP 109463 / NCPPB 4357 / Et1/99).